The primary structure comprises 449 residues: MMLSTEGREGFVVKVRGLPWSCSADEVMRFFSDCKIQNGTSGIRFIYTREGRPSGEAFVELESEDEVKLALKKDRETMGHRYVEVFKSNSVEMDWVLKHTGPNSPDTANDGFVRLRGLPFGCSKEEIVQFFSGLEIVPNGMTLPVDFQGRSTGEAFVQFASQEIAEKALKKHKERIGHRYIEIFKSSRAEVRTHYDPPRKLMAMQRPGPYDRPGAGRGYNSIGRGAGFERMRRGAYGGGYGGYDDYGGYNDGYGFGSDRFGRDQNYCFSGMSDHRYGDGGSSFQSTTGHCVHMRGLPYRATENDIYNFFSPLNPMRVHIEIGPDGRVTGEADVEFATHEDAVAAMAKDKANMQHRYVELFLNSTAGTSGGAYDHSYVELFLNSTAGASGGAYGSQMMGGMGISNQSSYGGPASQQLSGGYGGGYGGQSSMSGYDQVLQENSSDYQSNLA.

Met-1 carries the N-acetylmethionine modification. At Met-2 the chain carries N-acetylmethionine; in Heterogeneous nuclear ribonucleoprotein H2, N-terminally processed. In terms of domain architecture, RRM 1 spans 11 to 90 (FVVKVRGLPW…RYVEVFKSNS (80 aa)). The residue at position 23 (Ser-23) is a Phosphoserine. Lys-35 participates in a covalent cross-link: Glycyl lysine isopeptide (Lys-Gly) (interchain with G-Cter in SUMO2). Ser-54 and Ser-63 each carry phosphoserine. A Glycyl lysine isopeptide (Lys-Gly) (interchain with G-Cter in SUMO2) cross-link involves residue Lys-87. Ser-90 is subject to Phosphoserine. A Glycyl lysine isopeptide (Lys-Gly) (interchain with G-Cter in SUMO2) cross-link involves residue Lys-98. The region spanning 111 to 188 (GFVRLRGLPF…RYIEIFKSSR (78 aa)) is the RRM 2 domain. Arg-233 is modified (dimethylated arginine; alternate). Position 233 is an omega-N-methylarginine; alternate (Arg-233). One copy of the 1-1 repeat lies at 234 to 249 (GAYGGGYGGYDDYGGY). The 2 X 16 AA Gly-rich approximate repeats stretch occupies residues 234–433 (GAYGGGYGGY…YGGQSSMSGY (200 aa)). Tyr-246 carries the post-translational modification Phosphotyrosine. The 76-residue stretch at 289–364 (HCVHMRGLPY…RYVELFLNST (76 aa)) folds into the RRM 3 domain. At Ser-310 the chain carries Phosphoserine. A run of 3 repeats spans residues 354–372 (HRYV…GGAY), 374–392 (HSYV…GGAY), and 418–433 (GGYG…MSGY). The tract at residues 354 to 392 (HRYVELFLNSTAGTSGGAYDHSYVELFLNSTAGASGGAY) is 2 X 19 AA perfect repeats.

In terms of assembly, component of a ribonucleoprotein complex containing mRNAs and RNA-binding proteins including DDX5, HNRNPH2 and SRSF1 as well as splicing regulator ARVCF. Interacts with TXNL4/DIM1.

Its subcellular location is the nucleus. The protein localises to the nucleoplasm. Functionally, this protein is a component of the heterogeneous nuclear ribonucleoprotein (hnRNP) complexes which provide the substrate for the processing events that pre-mRNAs undergo before becoming functional, translatable mRNAs in the cytoplasm. Binds poly(RG). The sequence is that of Heterogeneous nuclear ribonucleoprotein H2 (HNRNPH2) from Bos taurus (Bovine).